A 358-amino-acid polypeptide reads, in one-letter code: Phenylalanine--tRNA ligase alpha subunit (358 aa).

E262 serves as a coordination point for Mg(2+).

This sequence belongs to the class-II aminoacyl-tRNA synthetase family. Phe-tRNA synthetase alpha subunit type 1 subfamily. In terms of assembly, tetramer of two alpha and two beta subunits. Mg(2+) is required as a cofactor.

The protein resides in the cytoplasm. The enzyme catalyses tRNA(Phe) + L-phenylalanine + ATP = L-phenylalanyl-tRNA(Phe) + AMP + diphosphate + H(+). In Streptomyces coelicolor (strain ATCC BAA-471 / A3(2) / M145), this protein is Phenylalanine--tRNA ligase alpha subunit (pheS).